The chain runs to 312 residues: Fe-S cluster assembly protein DRE2 (312 aa).

An N-terminal SAM-like domain region spans residues 7 to 139; the sequence is LSDVPRVLLL…VKPVFEEQSV (133 aa). Positions 140–204 are linker; sequence LLPFSINRSQ…EDELINEDEL (65 aa). [2Fe-2S] cluster contacts are provided by cysteine 214, cysteine 225, cysteine 228, and cysteine 230. Positions 214–230 are fe-S binding site A; the sequence is CRPKAGKRRRACKDCTC. 4 residues coordinate [4Fe-4S] cluster: cysteine 275, cysteine 278, cysteine 286, and cysteine 289. 2 consecutive short sequence motifs (cx2C motif) follow at residues 275–278 and 286–289; these read CGNC and CDGC. The interval 275 to 289 is fe-S binding site B; the sequence is CGNCSLGDAFRCDGC.

This sequence belongs to the anamorsin family. In terms of assembly, monomer. Interacts with TAH18. Interacts with MIA40. [2Fe-2S] cluster serves as cofactor. The cofactor is [4Fe-4S] cluster.

The protein localises to the cytoplasm. It localises to the mitochondrion intermembrane space. Its function is as follows. Component of the cytosolic iron-sulfur (Fe-S) protein assembly (CIA) machinery required for the maturation of extramitochondrial Fe-S proteins. Part of an electron transfer chain functioning in an early step of cytosolic Fe-S biogenesis, facilitating the de novo assembly of a [4Fe-4S] cluster on the scaffold complex CFD1-NBP35. Electrons are transferred to DRE2 from NADPH via the FAD- and FMN-containing protein TAH18. TAH18-DRE2 are also required for the assembly of the diferric tyrosyl radical cofactor of ribonucleotide reductase (RNR), probably by providing electrons for reduction during radical cofactor maturation in the catalytic small subunit RNR2. In Arthroderma otae (strain ATCC MYA-4605 / CBS 113480) (Microsporum canis), this protein is Fe-S cluster assembly protein DRE2.